A 68-amino-acid chain; its full sequence is Large ribosomal subunit protein bL31 (68 aa).

4 residues coordinate Zn(2+): Cys16, Cys18, Cys38, and Cys41.

This sequence belongs to the bacterial ribosomal protein bL31 family. Type A subfamily. Part of the 50S ribosomal subunit. The cofactor is Zn(2+).

Its function is as follows. Binds the 23S rRNA. The chain is Large ribosomal subunit protein bL31 from Thiobacillus denitrificans (strain ATCC 25259 / T1).